We begin with the raw amino-acid sequence, 386 residues long: Probable magnesium transporter NIPA5 (386 aa).

Topologically, residues methionine 1 to aspartate 18 are extracellular. The chain crosses the membrane as a helical span at residues asparagine 19–valine 39. Topologically, residues lysine 40–tyrosine 61 are cytoplasmic. Helical transmembrane passes span leucine 62–phenylalanine 82 and alanine 83–isoleucine 103. Residues serine 104 to lysine 115 lie on the Cytoplasmic side of the membrane. Residues leucine 116–leucine 136 form a helical membrane-spanning segment. Topologically, residues histidine 137 to proline 157 are extracellular. A helical membrane pass occupies residues alanine 158–isoleucine 178. At proline 179–tyrosine 189 the chain is on the cytoplasmic side. Residues isoleucine 190 to alanine 210 form a helical membrane-spanning segment. Topologically, residues leucine 211–glutamine 220 are extracellular. Residues leucine 221–methionine 241 form a helical membrane-spanning segment. The Cytoplasmic segment spans residues asparagine 242–valine 255. A helical membrane pass occupies residues valine 256–phenylalanine 276. Residues lysine 277 to serine 283 are Extracellular-facing. The helical transmembrane segment at glycine 284–leucine 304 threads the bilayer. The Cytoplasmic portion of the chain corresponds to histidine 305 to serine 386. Residues arginine 352–serine 386 are disordered. The span at proline 376–serine 386 shows a compositional bias: basic and acidic residues.

Belongs to the NIPA (TC 2.A.7) family. As to quaternary structure, homodimer.

The protein localises to the cell membrane. It is found in the early endosome. Acts as a Mg(2+) transporter. Can also transport other divalent cations such as Fe(2+), Sr(2+), Ba(2+), Mn(2+) and Co(2+) but to a much less extent than Mg(2+). The protein is Probable magnesium transporter NIPA5 of Arabidopsis thaliana (Mouse-ear cress).